Consider the following 108-residue polypeptide: Large ribosomal subunit protein uL24 (108 aa).

The protein belongs to the universal ribosomal protein uL24 family. Part of the 50S ribosomal subunit.

Its function is as follows. One of two assembly initiator proteins, it binds directly to the 5'-end of the 23S rRNA, where it nucleates assembly of the 50S subunit. In terms of biological role, one of the proteins that surrounds the polypeptide exit tunnel on the outside of the subunit. The sequence is that of Large ribosomal subunit protein uL24 from Geobacter sulfurreducens (strain ATCC 51573 / DSM 12127 / PCA).